A 275-amino-acid chain; its full sequence is Large ribosomal subunit protein uL2 (275 aa).

The tract at residues 225–275 (MNPIDHPHGGGEGRTSGGRHPVTPWGKPTKGKKTRSNKKTDRLIMRRRQTQ) is disordered.

It belongs to the universal ribosomal protein uL2 family. As to quaternary structure, part of the 50S ribosomal subunit. Forms a bridge to the 30S subunit in the 70S ribosome.

One of the primary rRNA binding proteins. Required for association of the 30S and 50S subunits to form the 70S ribosome, for tRNA binding and peptide bond formation. It has been suggested to have peptidyltransferase activity; this is somewhat controversial. Makes several contacts with the 16S rRNA in the 70S ribosome. This is Large ribosomal subunit protein uL2 from Paramagnetospirillum magneticum (strain ATCC 700264 / AMB-1) (Magnetospirillum magneticum).